A 509-amino-acid chain; its full sequence is Scavenger receptor class B member 1 (509 aa).

The Cytoplasmic segment spans residues 1 to 11 (MGVSSRARWVA). Residues 12–32 (LGLGVLGLLCAALGVIMILMV) form a helical membrane-spanning segment. At 33 to 440 (PSLIKQQVLK…YTQLVLMPQV (408 aa)) the chain is on the extracellular side. N-linked (GlcNAc...) asparagine glycans are attached at residues N102, N108, N116, N173, N212, N227, N255, N310, N330, and N383. Residues C251 and C384 are joined by a disulfide bond. The helical transmembrane segment at 441–461 (LHYAQYVLLGLGGLLLLVPII) threads the bilayer. The Cytoplasmic portion of the chain corresponds to 462-509 (YQLRSQEKCFLFWSGSKKGSQDKEAMQAYSESLMSPAAKGTVLQEAKL).

It belongs to the CD36 family. The C-terminal region binds to PDZK1. N-glycosylated. In terms of processing, the six cysteines of the extracellular domain are all involved in intramolecular disulfide bonds.

It is found in the cell membrane. The protein localises to the membrane. The protein resides in the caveola. In terms of biological role, receptor for different ligands such as phospholipids, cholesterol ester, lipoproteins, phosphatidylserine and apoptotic cells. Receptor for HDL, mediating selective uptake of cholesteryl ether and HDL-dependent cholesterol efflux. Also facilitates the flux of free and esterified cholesterol between the cell surface and apoB-containing lipoproteins and modified lipoproteins, although less efficiently than HDL. May be involved in the phagocytosis of apoptotic cells, via its phosphatidylserine binding activity. The protein is Scavenger receptor class B member 1 (Scarb1) of Rattus norvegicus (Rat).